The primary structure comprises 476 residues: BTB/POZ domain-containing protein KCTD8 (476 aa).

The 79-residue stretch at 44-122 (EVVELNVGGQ…LRDKQLALPE (79 aa)) folds into the BTB domain. At Ser78 the chain carries Phosphoserine. Arg80 bears the Omega-N-methylarginine mark. The interval 331–412 (SPKQEHEDRK…WMPPPDKRRN (82 aa)) is disordered. Basic and acidic residues predominate over residues 333 to 349 (KQEHEDRKRDKVTDKGS). Polar residues predominate over residues 350–391 (ESGTSCNELSTSSCDSHSEASTPQDNPANTQQAAAHQPNTLT). Ser413 is modified (phosphoserine).

As to quaternary structure, interacts as a tetramer with GABBR1 and GABBR2.

It localises to the presynaptic cell membrane. The protein localises to the postsynaptic cell membrane. In terms of biological role, auxiliary subunit of GABA-B receptors that determine the pharmacology and kinetics of the receptor response. Increases agonist potency and markedly alter the G-protein signaling of the receptors by accelerating onset and promoting desensitization. The sequence is that of BTB/POZ domain-containing protein KCTD8 (Kctd8) from Mus musculus (Mouse).